Consider the following 132-residue polypeptide: Ribonuclease VapC (132 aa).

Residues 4 to 123 (YMLDTNIVIY…SNNLREFERV (120 aa)) form the PINc domain. Mg(2+)-binding residues include aspartate 7 and aspartate 98.

Belongs to the PINc/VapC protein family. Probably forms a complex with cognate antitoxin VapB2. Mg(2+) is required as a cofactor.

Its function is as follows. Toxic component of a type II toxin-antitoxin (TA) system. Acts as an RNase. Its toxic effect is neutralized by cognate antitoxin VapB2 but not by non-cognate antitoxin VapB1. This chain is Ribonuclease VapC, found in Haemophilus influenzae (strain 86-028NP).